The following is a 159-amino-acid chain: uncharacterized protein (159 aa).

An N-acetyltransferase domain is found at 7–151 (LLINYKTLEE…NPLVWHPASE (145 aa)).

This is an uncharacterized protein from Bacillus licheniformis (strain ATCC 14580 / DSM 13 / JCM 2505 / CCUG 7422 / NBRC 12200 / NCIMB 9375 / NCTC 10341 / NRRL NRS-1264 / Gibson 46).